The chain runs to 211 residues: Large ribosomal subunit protein eL13 (211 aa).

It belongs to the eukaryotic ribosomal protein eL13 family. As to quaternary structure, component of the 60S large ribosomal subunit (LSU).

It is found in the cytoplasm. In terms of biological role, component of the ribosome, a large ribonucleoprotein complex responsible for the synthesis of proteins in the cell. The small ribosomal subunit (SSU) binds messenger RNAs (mRNAs) and translates the encoded message by selecting cognate aminoacyl-transfer RNA (tRNA) molecules. The large subunit (LSU) contains the ribosomal catalytic site termed the peptidyl transferase center (PTC), which catalyzes the formation of peptide bonds, thereby polymerizing the amino acids delivered by tRNAs into a polypeptide chain. The nascent polypeptides leave the ribosome through a tunnel in the LSU and interact with protein factors that function in enzymatic processing, targeting, and the membrane insertion of nascent chains at the exit of the ribosomal tunnel. As part of the LSU, it is probably required for its formation and the maturation of rRNAs. The polypeptide is Large ribosomal subunit protein eL13 (rpl13) (Danio rerio (Zebrafish)).